The sequence spans 356 residues: ATP-dependent 6-phosphofructokinase (356 aa).

Residues glycine 15, 78–79 (KG), and 115–118 (GEGT) each bind ATP. Position 116 (glutamate 116) interacts with Mg(2+). Substrate is bound by residues 138-140 (TID), arginine 175, 182-184 (MGR), glutamate 235, arginine 272, and 278-281 (HLQR). Aspartate 140 acts as the Proton acceptor in catalysis.

It belongs to the phosphofructokinase type A (PFKA) family. Mixed-substrate PFK group III subfamily. As to quaternary structure, homodimer or homotetramer. The cofactor is Mg(2+).

It is found in the cytoplasm. It carries out the reaction beta-D-fructose 6-phosphate + ATP = beta-D-fructose 1,6-bisphosphate + ADP + H(+). It participates in carbohydrate degradation; glycolysis; D-glyceraldehyde 3-phosphate and glycerone phosphate from D-glucose: step 3/4. Catalyzes the phosphorylation of D-fructose 6-phosphate to fructose 1,6-bisphosphate by ATP, the first committing step of glycolysis. The chain is ATP-dependent 6-phosphofructokinase from Chloroflexus aggregans (strain MD-66 / DSM 9485).